The primary structure comprises 86 residues: Toxin ICK-18 (86 aa).

The first 19 residues, 1 to 19 (MKTIFALVFCCAIAVVVLG), serve as a signal peptide directing secretion. 4 disulfide bridges follow: cysteine 35/cysteine 49, cysteine 42/cysteine 61, cysteine 48/cysteine 76, and cysteine 79/cysteine 86.

It belongs to the neurotoxin 21 family. In terms of tissue distribution, expressed by the venom gland.

It localises to the secreted. Its function is as follows. Probable neurotoxin with ion channel impairing activity. This is Toxin ICK-18 from Trittame loki (Brush-footed trapdoor spider).